Here is a 546-residue protein sequence, read N- to C-terminus: Probable T-complex protein 1 subunit theta (546 aa).

The interval 527-546 (MSKPAGGPKPPGPNPHWDDD) is disordered.

This sequence belongs to the TCP-1 chaperonin family. As to quaternary structure, heterooligomeric complex of about 850 to 900 kDa that forms two stacked rings, 12 to 16 nm in diameter.

The protein resides in the cytoplasm. Functionally, molecular chaperone; assists the folding of proteins upon ATP hydrolysis. Known to play a role, in vitro, in the folding of actin and tubulin. This chain is Probable T-complex protein 1 subunit theta (cct8), found in Schizosaccharomyces pombe (strain 972 / ATCC 24843) (Fission yeast).